Reading from the N-terminus, the 466-residue chain is 3-isopropylmalate dehydratase large subunit (466 aa).

The [4Fe-4S] cluster site is built by Cys347, Cys407, and Cys410.

It belongs to the aconitase/IPM isomerase family. LeuC type 1 subfamily. In terms of assembly, heterodimer of LeuC and LeuD. [4Fe-4S] cluster is required as a cofactor.

The catalysed reaction is (2R,3S)-3-isopropylmalate = (2S)-2-isopropylmalate. It participates in amino-acid biosynthesis; L-leucine biosynthesis; L-leucine from 3-methyl-2-oxobutanoate: step 2/4. Catalyzes the isomerization between 2-isopropylmalate and 3-isopropylmalate, via the formation of 2-isopropylmaleate. The polypeptide is 3-isopropylmalate dehydratase large subunit (Serratia proteamaculans (strain 568)).